We begin with the raw amino-acid sequence, 69 residues long: UPF0150 protein Ta0767 (69 aa).

The protein belongs to the UPF0150 family.

This chain is UPF0150 protein Ta0767, found in Thermoplasma acidophilum (strain ATCC 25905 / DSM 1728 / JCM 9062 / NBRC 15155 / AMRC-C165).